Reading from the N-terminus, the 257-residue chain is Large ribosomal subunit protein uL2 (257 aa).

Residues Lys-42 and Lys-149 each participate in a glycyl lysine isopeptide (Lys-Gly) (interchain with G-Cter in SUMO2) cross-link. The tract at residues 207-232 (VEHPFGGGNHQHIGKPSTIRRDAPAG) is disordered. (3S)-3-hydroxyhistidine is present on His-216. Residues Lys-234 and Lys-250 each participate in a glycyl lysine isopeptide (Lys-Gly) (interchain with G-Cter in SUMO2) cross-link.

The protein belongs to the universal ribosomal protein uL2 family. As to quaternary structure, component of the large ribosomal subunit. Interacts with CRY1. Hydroxylated on His-216 by RIOX1. The modification is impaired by hypoxia.

It localises to the cytoplasm. Its function is as follows. Component of the large ribosomal subunit. The ribosome is a large ribonucleoprotein complex responsible for the synthesis of proteins in the cell. The polypeptide is Large ribosomal subunit protein uL2 (RPL8) (Bos taurus (Bovine)).